The sequence spans 922 residues: MFLHSVNLWNLAFYVFMVFLATLGLWDVFFGFEENKCSMSYMFEYPEYQKIELPKKLTKRYPAYELYLYGEGSYAEEHKILPLTGIPVLFLPGNAGSYKQVRSIGSIALRKAEDIDFKYHFDFFSVNFNEELVALYGGSLQKQTKFVHECIKAILKLYKGQEFAPTSVAIIGHSMGGLVARALLTLKNFKQDLINLLVTQATPHVAPVMPLDRFITEFYMNVNNYWILNARHINLTTLSVAGGFRDYQVRSGLTFLPKLSHYTSALSVVSSAVPKTWVSTDHLSIVWCKQLQLTTIRAFFDLIDADTKQITQKPKKKLSVLNHHFIRHPAKQFEENPSIISDLTGTSMWVPVKVSRWSYVAYNESDKIYFAFPLANHRKIYTHAYCQSTMLDTNSWIFGCINSTSMCRQGVDLSWKAELLPTIKSLTLRLQDYPSLSHIVVYVPSVHGSKFVVDCEFFKKEARSMQLPVTHLFSFGLSSRKVTLNTNGLYYNIELLNFGQIYQAFKVNVVSKCTGSKEEITSIYKLHIPWSYEDSLTIAQVPSSTDISLKLHVAQPENDSHVALLKMYTSSDCQYEVTIKTSFPQILGQVVRFHGGALPAYVVSSILLAYGGQLYSLLSTGYCLEYSTILDKEAKPYKVDPFVIMIKFLLGYKWFKELWDAVLLPELDAIVLTSQSMCFPLVSLILFLFGTCTAYWSGLLSSTSVQLLSSLWLALKRPAELPKDIKVMSPDLPVLTVVFLIVSWTTCGALAILLSYLYYVFKVVHLQASLTTFKNNQPVNPKHSRRSEKKSNHHKDSAVQSLRLCANDAEDSLRMHSTVINLLTWVVLLSMPSLIYWLKNLRYYFKLSPDPCKPLAFLLIPAIAILGNTHTVSVKSSKLLKTVSQFPLPLAVGVIAFGSSHLYRVPCFVIIPLVFHALCNFM.

The Cytoplasmic segment spans residues 1 to 11 (MFLHSVNLWNL). The helical transmembrane segment at 12 to 32 (AFYVFMVFLATLGLWDVFFGF) threads the bilayer. The Lumenal portion of the chain corresponds to 33–597 (EENKCSMSYM…GQVVRFHGGA (565 aa)). Serine 174 is a catalytic residue. N-linked (GlcNAc...) asparagine glycans are attached at residues asparagine 363, asparagine 402, and asparagine 558. Residues 598–618 (LPAYVVSSILLAYGGQLYSLL) form a helical membrane-spanning segment. Over 619 to 641 (STGYCLEYSTILDKEAKPYKVDP) the chain is Cytoplasmic. Residues 642-662 (FVIMIKFLLGYKWFKELWDAV) traverse the membrane as a helical segment. Residues 663 to 668 (LLPELD) lie on the Lumenal side of the membrane. The helical transmembrane segment at 669-689 (AIVLTSQSMCFPLVSLILFLF) threads the bilayer. Residues 690-694 (GTCTA) lie on the Cytoplasmic side of the membrane. The chain crosses the membrane as a helical span at residues 695–715 (YWSGLLSSTSVQLLSSLWLAL). Residues 716-733 (KRPAELPKDIKVMSPDLP) lie on the Lumenal side of the membrane. The helical transmembrane segment at 734–754 (VLTVVFLIVSWTTCGALAILL) threads the bilayer. Topologically, residues 755–817 (SYLYYVFKVV…DAEDSLRMHS (63 aa)) are cytoplasmic. The disordered stretch occupies residues 776-798 (NQPVNPKHSRRSEKKSNHHKDSA). A compositionally biased stretch (basic residues) spans 782 to 793 (KHSRRSEKKSNH). A helical transmembrane segment spans residues 818 to 838 (TVINLLTWVVLLSMPSLIYWL). At 839-894 (KNLRYYFKLSPDPCKPLAFLLIPAIAILGNTHTVSVKSSKLLKTVSQFPLPLAVGV) the chain is on the lumenal side. Residues 895–915 (IAFGSSHLYRVPCFVIIPLVF) form a helical membrane-spanning segment. At 916–922 (HALCNFM) the chain is on the cytoplasmic side.

It belongs to the GPI inositol-deacylase family.

It localises to the endoplasmic reticulum membrane. In terms of biological role, GPI inositol-deacylase that catalyzes the remove of the acyl chain linked to the 2-OH position of inositol ring from the GPI-anchored protein (GPI-AP) in the endoplasmic reticulum. Initiates the post-attachment remodeling phase of GPI-AP biogenesis and participates in endoplasmic reticulum (ER)-to-Golgi transport of GPI-anchored protein. This chain is GPI inositol-deacylase, found in Mus musculus (Mouse).